The primary structure comprises 226 residues: uncharacterized protein (226 aa).

This is an uncharacterized protein from Methanocaldococcus jannaschii (strain ATCC 43067 / DSM 2661 / JAL-1 / JCM 10045 / NBRC 100440) (Methanococcus jannaschii).